The primary structure comprises 62 residues: MKAADIRNLDSNQIHNKIAELKAELFNLRFQHAVGQLENTARLRTVKKTIAQMKTIISERGE.

The protein belongs to the universal ribosomal protein uL29 family.

The polypeptide is Large ribosomal subunit protein uL29 (Acholeplasma laidlawii (strain PG-8A)).